We begin with the raw amino-acid sequence, 396 residues long: Elongation factor Tu (396 aa).

The region spanning 10 to 206 is the tr-type G domain; sequence KPHVNIGTIG…AVDEYIPTPQ (197 aa). The interval 19-26 is G1; it reads GHVDHGKT. 19-26 contributes to the GTP binding site; it reads GHVDHGKT. Thr-26 serves as a coordination point for Mg(2+). The segment at 60 to 64 is G2; sequence GITIS. Residues 81–84 are G3; it reads DCPG. Residues 81-85 and 136-139 each bind GTP; these read DCPGH and NKVD. The segment at 136 to 139 is G4; sequence NKVD. A G5 region spans residues 174–176; that stretch reads SAL.

It belongs to the TRAFAC class translation factor GTPase superfamily. Classic translation factor GTPase family. EF-Tu/EF-1A subfamily. In terms of assembly, monomer.

It localises to the cytoplasm. It catalyses the reaction GTP + H2O = GDP + phosphate + H(+). Functionally, GTP hydrolase that promotes the GTP-dependent binding of aminoacyl-tRNA to the A-site of ribosomes during protein biosynthesis. This is Elongation factor Tu from Stigmatella aurantiaca.